Reading from the N-terminus, the 675-residue chain is MSEIPEKVRKRVASLRDELDYHNHRYYVLDDPEIPDAAYDALMRELQDLEAKYPELVTPDSPTQRVGGAPLKAFEEARHLLPMLSLDNAFEEADVLAFEKRIRDRLGEESEIEFAVEPKLDGLAISLLYEDGHLVRGATRGDGATGEDVTANVRTIRAIPLRLQGRGWPKLLEVRGEVYMDRAGFEAFNREAASRGEKVFVNPRNAAAGSLRQLDSRITAKRPLTFFAYGAGHVEGGELPDTHAAVLDALAEWGQRVCPERDVVTGAAGCLEYYRRIGERRDGLPYDIDGVVYKVNRFELQQRLGFVSRAPRWAIAHKYPAQEQMTLLRDVEFQVGRTGALTPVARLEPVFVGGVTVSNATLHNMDEVERKDVRIGDTVIVRRAGDVIPEVAAVVLSRRPHNARHVVMPTHCPVCGSEIVRSEGEAVARCSGGLYCAAQRREAIKHFASRRAMDIEGLGDKLVEQLVDAGLVDHVDGLYRLTAEQLAGLERMGEKSAHNLVDALEKSKHTQLARFIFALGIREVGEATARALAIHFGGLDALMAADEEALMQVPDVGPVVAHHVATFFQQPHNREVIDALREAGVHWEESEPAALQAEDLPLSGNTYVLTGALESMTREEAGDRLMALGAKVSGSVSKKTTAVIAGEAAGSKLAKAEKLGVPVLSEAEFLELIGE.

Residues 36 to 40, 85 to 86, and glutamate 117 contribute to the NAD(+) site; these read DAAYD and SL. The N6-AMP-lysine intermediate role is filled by lysine 119. Residues arginine 140, glutamate 177, lysine 294, and lysine 318 each contribute to the NAD(+) site. Residues cysteine 412, cysteine 415, cysteine 430, and cysteine 436 each coordinate Zn(2+). One can recognise a BRCT domain in the interval 597-675; the sequence is AEDLPLSGNT…EAEFLELIGE (79 aa).

It belongs to the NAD-dependent DNA ligase family. LigA subfamily. Mg(2+) is required as a cofactor. It depends on Mn(2+) as a cofactor.

It carries out the reaction NAD(+) + (deoxyribonucleotide)n-3'-hydroxyl + 5'-phospho-(deoxyribonucleotide)m = (deoxyribonucleotide)n+m + AMP + beta-nicotinamide D-nucleotide.. Functionally, DNA ligase that catalyzes the formation of phosphodiester linkages between 5'-phosphoryl and 3'-hydroxyl groups in double-stranded DNA using NAD as a coenzyme and as the energy source for the reaction. It is essential for DNA replication and repair of damaged DNA. This is DNA ligase from Thioalkalivibrio sulfidiphilus (strain HL-EbGR7).